Consider the following 123-residue polypeptide: Small ribosomal subunit protein uS12 (123 aa).

Asp89 is subject to 3-methylthioaspartic acid. Positions 104–123 (TQGVKDRRQRRSKYGAKRPK) are disordered. Basic residues predominate over residues 110 to 123 (RRQRRSKYGAKRPK).

It belongs to the universal ribosomal protein uS12 family. Part of the 30S ribosomal subunit. Contacts proteins S8 and S17. May interact with IF1 in the 30S initiation complex.

In terms of biological role, with S4 and S5 plays an important role in translational accuracy. Interacts with and stabilizes bases of the 16S rRNA that are involved in tRNA selection in the A site and with the mRNA backbone. Located at the interface of the 30S and 50S subunits, it traverses the body of the 30S subunit contacting proteins on the other side and probably holding the rRNA structure together. The combined cluster of proteins S8, S12 and S17 appears to hold together the shoulder and platform of the 30S subunit. The sequence is that of Small ribosomal subunit protein uS12 from Parvibaculum lavamentivorans (strain DS-1 / DSM 13023 / NCIMB 13966).